The sequence spans 391 residues: Arsenite methyltransferase (391 aa).

The tract at residues 1 to 126 (MELWTHPTPA…TMVADRDPEE (126 aa)) is disordered. Positions 28 to 39 (CSQPWATTPGTN) are enriched in polar residues. A compositionally biased stretch (low complexity) spans 40 to 65 (SSDASRTPTTASASATSKPQSASARA). Over residues 102–116 (KRSTTCEATMSNDNE) the composition is skewed to polar residues.

Belongs to the methyltransferase superfamily. Arsenite methyltransferase family.

It carries out the reaction arsenic triglutathione + [thioredoxin]-dithiol + S-adenosyl-L-methionine + 2 H2O = methylarsonous acid + [thioredoxin]-disulfide + 3 glutathione + S-adenosyl-L-homocysteine + H(+). The catalysed reaction is arsenic triglutathione + 2 [thioredoxin]-dithiol + 2 S-adenosyl-L-methionine + H2O = dimethylarsinous acid + 2 [thioredoxin]-disulfide + 3 glutathione + 2 S-adenosyl-L-homocysteine + 2 H(+). The enzyme catalyses arsenic triglutathione + 3 [thioredoxin]-dithiol + 3 S-adenosyl-L-methionine = trimethylarsine + 3 [thioredoxin]-disulfide + 3 glutathione + 3 S-adenosyl-L-homocysteine + 3 H(+). Its function is as follows. Catalyzes the transfer of a methyl group from AdoMet to arsenite, producing methylated arsenicals. The protein is Arsenite methyltransferase of Halobacterium salinarum (strain ATCC 700922 / JCM 11081 / NRC-1) (Halobacterium halobium).